The primary structure comprises 221 residues: Chalcone--flavanone isomerase (221 aa).

Substrate is bound by residues T47, N112, and S189.

This sequence belongs to the chalcone isomerase family.

It carries out the reaction a chalcone = a flavanone.. The protein operates within secondary metabolite biosynthesis; flavonoid biosynthesis. Its function is as follows. Catalyzes the intramolecular cyclization of bicyclic chalcones into tricyclic (S)-flavanones. Responsible for the isomerization of 4,2',4',6'-tetrahydroxychalcone (also termed chalcone) into naringenin. This Dianthus caryophyllus (Carnation) protein is Chalcone--flavanone isomerase (CHI).